Consider the following 155-residue polypeptide: Ribosome maturation factor RimP (155 aa).

The protein belongs to the RimP family.

Its subcellular location is the cytoplasm. Its function is as follows. Required for maturation of 30S ribosomal subunits. This chain is Ribosome maturation factor RimP, found in Prochlorococcus marinus (strain AS9601).